The following is a 597-amino-acid chain: Nuclear factor erythroid 2-related factor 2 (597 aa).

A DLG motif motif is present at residues 29-31; it reads DLG. At Ser-40 the chain carries Phosphoserine; by PKC. Residues 79–82 carry the ETGE motif motif; that stretch reads ETGE. A Phosphoserine modification is found at Ser-207. The tract at residues 327-440 is disordered; the sequence is TMEFNDSDSG…APFTKDKHSS (114 aa). Over residues 333 to 345 the composition is skewed to polar residues; the sequence is SDSGISLNTSPSR. 3 N-linked (Glc) (glycation) lysine glycosylation sites follow: Lys-454, Lys-464, and Lys-479. Positions 489–552 constitute a bZIP domain; that stretch reads LIRDIRRRGK…HLLKRRLSTL (64 aa). Arg-491 carries N-linked (Glc) (glycation) arginine glycosylation. Residues 491-510 form a basic motif region; the sequence is RDIRRRGKNKVAAQNCRKRK. The segment at 514-521 is leucine-zipper; sequence IVELEQDL. Arg-561 carries N-linked (Glc) (glycation) arginine glycosylation. The tract at residues 563-597 is disordered; the sequence is EDGKPYSPSEYSLQQTRDGNVFLVPKSKKPDTKKN. The N-linked (Glc) (glycation) lysine glycan is linked to Lys-566. The segment covering 571–580 has biased composition (polar residues); the sequence is SEYSLQQTRD. Residues 583–588 are mediates interaction with CHD6 and is necessary to activate transcription; it reads VFLVPK. Residues Lys-588 and Lys-591 each carry the N6-acetyllysine; by CREBBP modification.

Belongs to the bZIP family. CNC subfamily. In terms of assembly, heterodimer; heterodimerizes with small Maf proteins. Interacts (via the bZIP domain) with MAFG and MAFK; required for binding to antioxidant response elements (AREs) on DNA. Interacts with KEAP1; the interaction is direct and promotes ubiquitination by the BCR(KEAP1) E3 ubiquitin ligase complex. Forms a ternary complex with PGAM5 and KEAP1. Interacts with EEF1D at heat shock promoter elements (HSE). Interacts via its leucine-zipper domain with the coiled-coil domain of PMF1. Interacts with CHD6; involved in activation of the transcription. Interacts with ESRRB; represses NFE2L2 transcriptional activity. Interacts with MOTS-c, a peptide produced by the mitochondrially encoded 12S rRNA MT-RNR1; the interaction occurs in the nucleus following metabolic stress. Post-translationally, ubiquitinated in the cytoplasm by the BCR(KEAP1) E3 ubiquitin ligase complex leading to its degradation. In response to oxidative stress, electrophile metabolites, such as sulforaphane, modify KEAP1, leading to inhibit activity of the BCR(KEAP1) complex, promoting NFE2L2/NRF2 nuclear accumulation and activity. In response to autophagy, the BCR(KEAP1) complex is inactivated. Phosphorylated by EIF2AK3/PERK following unfolded protein response (UPR), promoting dissociation from its cytoplasmic inhibitor KEAP1, followed by its translocation into the nucleus. Phosphorylation of Ser-40 by PKC in response to oxidative stress dissociates NFE2L2 from its cytoplasmic inhibitor KEAP1, promoting its translocation into the nucleus. In terms of processing, acetylation at Lys-588 and Lys-591 increases nuclear localization whereas deacetylation by SIRT1 enhances cytoplasmic presence. Post-translationally, glycation impairs transcription factor activity by preventing heterodimerization with small Maf proteins. Deglycation by FN3K restores activity. As to expression, widely expressed. Highest expression in liver, skeletal muscle, luminal cells of the stomach and intestine, lining of the bronchi and alveoli, and in renal tubules; followed by heart, spleen, testis and brain.

It is found in the cytoplasm. It localises to the cytosol. The protein localises to the nucleus. Functionally, transcription factor that plays a key role in the response to oxidative stress: binds to antioxidant response (ARE) elements present in the promoter region of many cytoprotective genes, such as phase 2 detoxifying enzymes, and promotes their expression, thereby neutralizing reactive electrophiles. In normal conditions, ubiquitinated and degraded in the cytoplasm by the BCR(KEAP1) complex. In response to oxidative stress, electrophile metabolites inhibit activity of the BCR(KEAP1) complex, promoting nuclear accumulation of NFE2L2/NRF2, heterodimerization with one of the small Maf proteins and binding to ARE elements of cytoprotective target genes. The NFE2L2/NRF2 pathway is also activated in response to selective autophagy: autophagy promotes interaction between KEAP1 and SQSTM1/p62 and subsequent inactivation of the BCR(KEAP1) complex, leading to NFE2L2/NRF2 nuclear accumulation and expression of cytoprotective genes. The NFE2L2/NRF2 pathway is also activated during the unfolded protein response (UPR), contributing to redox homeostasis and cell survival following endoplasmic reticulum stress. May also be involved in the transcriptional activation of genes of the beta-globin cluster by mediating enhancer activity of hypersensitive site 2 of the beta-globin locus control region. Also plays an important role in the regulation of the innate immune response. It is a critical regulator of the innate immune response and survival during sepsis by maintaining redox homeostasis and restraint of the dysregulation of pro-inflammatory signaling pathways like MyD88-dependent and -independent and TNF-alpha signaling. Suppresses macrophage inflammatory response by blocking pro-inflammatory cytokine transcription and the induction of IL6. Binds to the proximity of pro-inflammatory genes in macrophages and inhibits RNA Pol II recruitment. The inhibition is independent of the Nrf2-binding motif and reactive oxygen species level. Represses antiviral cytosolic DNA sensing by suppressing the expression of the adapter protein STING1 and decreasing responsiveness to STING1 agonists while increasing susceptibility to infection with DNA viruses. This is Nuclear factor erythroid 2-related factor 2 from Mus musculus (Mouse).